The chain runs to 340 residues: Ribosomal RNA large subunit methyltransferase F (340 aa).

Positions Met1–Arg36 are disordered.

This sequence belongs to the methyltransferase superfamily. METTL16/RlmF family.

It localises to the cytoplasm. The enzyme catalyses adenosine(1618) in 23S rRNA + S-adenosyl-L-methionine = N(6)-methyladenosine(1618) in 23S rRNA + S-adenosyl-L-homocysteine + H(+). In terms of biological role, specifically methylates the adenine in position 1618 of 23S rRNA. The polypeptide is Ribosomal RNA large subunit methyltransferase F (Pseudomonas fluorescens (strain Pf0-1)).